Consider the following 263-residue polypeptide: tRNA (guanine-N(1)-)-methyltransferase (263 aa).

Residues G113 and 137-142 (LGDYVL) each bind S-adenosyl-L-methionine.

This sequence belongs to the RNA methyltransferase TrmD family. As to quaternary structure, homodimer.

The protein resides in the cytoplasm. It catalyses the reaction guanosine(37) in tRNA + S-adenosyl-L-methionine = N(1)-methylguanosine(37) in tRNA + S-adenosyl-L-homocysteine + H(+). Its function is as follows. Specifically methylates guanosine-37 in various tRNAs. This chain is tRNA (guanine-N(1)-)-methyltransferase, found in Renibacterium salmoninarum (strain ATCC 33209 / DSM 20767 / JCM 11484 / NBRC 15589 / NCIMB 2235).